Here is a 240-residue protein sequence, read N- to C-terminus: REF/SRPP-like protein At1g67360 (240 aa).

Residues 208 to 240 are disordered; that stretch reads KEDARRKKGGDTAGKKGETTDAADGDKSSSDSE.

Belongs to the REF/SRPP family.

The chain is REF/SRPP-like protein At1g67360 from Arabidopsis thaliana (Mouse-ear cress).